A 398-amino-acid chain; its full sequence is Phosphoglycerate kinase (398 aa).

Residues D21 to N23, R36, H59 to R62, R119, and R157 contribute to the substrate site. Residues K208, G296, E327, and G354–S357 contribute to the ATP site.

Belongs to the phosphoglycerate kinase family. As to quaternary structure, monomer.

It localises to the cytoplasm. The enzyme catalyses (2R)-3-phosphoglycerate + ATP = (2R)-3-phospho-glyceroyl phosphate + ADP. It functions in the pathway carbohydrate degradation; glycolysis; pyruvate from D-glyceraldehyde 3-phosphate: step 2/5. The polypeptide is Phosphoglycerate kinase (pgk) (Streptococcus pyogenes serotype M1).